The primary structure comprises 671 residues: Preterminal protein (671 aa).

Residues 380–389 (RLPVRRRRRR) carry the Nuclear localization signal motif. Positions 386-409 (RRRRVPPPPPPPEEEEEGEALMEE) are disordered. The segment covering 397-409 (PEEEEEGEALMEE) has biased composition (acidic residues). S580 bears the O-(5'-phospho-DNA)-serine mark. A disordered region spans residues 645–671 (GADVPLPPLPAGPEPPLPPGARPRHRF). Residues 649–665 (PLPPLPAGPEPPLPPGA) are compositionally biased toward pro residues.

This sequence belongs to the adenoviridae terminal protein family. As to quaternary structure, heterodimer with the polymerase; this heterodimer binds to bp 9 to 18 of the genome. Interacts with host POU2F1; POU2F1 binds to the auxiliary sequences in the inverted terminal repeats and tethers the pTP-POL heterodimer to the origin DNA thereby participating in the assembly of the pre-initiation complex (POL-TP-DBP-NFIA-POU2F1). In terms of processing, preterminal protein is used to replicate viral genome, upon genomic encapsidation it is processed first into iTP and finally into TP by adenovirus protease.

The protein localises to the host nucleus matrix. Functionally, protein covalently bound to the viral DNA that acts as a primer for viral genomic replication by DNA strand displacement. Assembles on the viral origin of replication in an initiation complex with viral polymerase, DBP, host NFIA and host POU2F1/OCT1. During initiation, the polymerase covalently couples the first dCTP with Ser-580 of pTP. The terminal protein stimulates the template activity over 20 fold compared to protein-free templates. Neo-synthesized viral genomes are linked to two preterminal proteins, one for each 5' end. These new genomes are encapsidated in the nucleus, and during capsid maturation by viral protease, preterminal protein is first cleaved into intermediary (iTP), then into mature TP. May play a role in host nuclear matrix localization of genomic DNA. The polypeptide is Preterminal protein (Homo sapiens (Human)).